Reading from the N-terminus, the 423-residue chain is Sorting nexin-4 (423 aa).

The span at 1–21 (MTDKGKNDLTSKAKDKARGNP) shows a compositional bias: basic and acidic residues. The disordered stretch occupies residues 1–25 (MTDKGKNDLTSKAKDKARGNPEKPP). The PX domain occupies 29–157 (EIIVSDPQKR…TFLVSKDWES (129 aa)). Positions 78, 80, 104, and 123 each coordinate a 1,2-diacyl-sn-glycero-3-phospho-(1D-myo-inositol-3-phosphate). Coiled coils occupy residues 217–252 (KKND…AKLK) and 346–381 (SRRE…ECLK).

Belongs to the sorting nexin family. Forms a complex with ATG20 and ATG17. Binds also to SNC1 and SNX41.

It is found in the cytoplasm. The protein localises to the cytosol. The protein resides in the preautophagosomal structure membrane. It localises to the endosome membrane. Functionally, sorting nexin, involved in the separation or division of vacuoles throughout the entire life cycle of the cells. Involved in retrieval of late-Golgi SNAREs from post-Golgi endosomes to the trans-Golgi network, for cytoplasm to vacuole transport (Cvt), and autophagy of large cargos including mitophagy, pexophagy and glycophagy. Involved in proper sorting of the v-SNARE protein SNC1. The protein is Sorting nexin-4 of Saccharomyces cerevisiae (strain ATCC 204508 / S288c) (Baker's yeast).